Here is a 430-residue protein sequence, read N- to C-terminus: Cortical fragment-lytic enzyme (430 aa).

LysM domains are found at residues 3-47 (QIVT…ALIV) and 52-96 (NNYY…QLYI). The GH18 domain occupies 104–430 (VESIAYLQPS…VENFTITKKG (327 aa)). Glutamate 219 functions as the Proton donor in the catalytic mechanism.

It belongs to the glycosyl hydrolase 18 family. Chitinase class II subfamily.

The protein resides in the forespore. Functionally, N-acetylglucosaminidase involved in cortex peptidoglycan degradation during germination. Cleaves only partially degraded spore peptidoglycans. Recognizes muramic acid delta-lactam residues specific to spore peptidoglycans. The chain is Cortical fragment-lytic enzyme from Bacillus anthracis.